A 339-amino-acid polypeptide reads, in one-letter code: RNA 3'-terminal phosphate cyclase (339 aa).

ATP contacts are provided by residues glutamine 103 and 283-287; that span reads HLADQ. Histidine 308 serves as the catalytic Tele-AMP-histidine intermediate.

Belongs to the RNA 3'-terminal cyclase family. Type 1 subfamily.

The protein localises to the cytoplasm. It carries out the reaction a 3'-end 3'-phospho-ribonucleotide-RNA + ATP = a 3'-end 2',3'-cyclophospho-ribonucleotide-RNA + AMP + diphosphate. Functionally, catalyzes the conversion of 3'-phosphate to a 2',3'-cyclic phosphodiester at the end of RNA. The mechanism of action of the enzyme occurs in 3 steps: (A) adenylation of the enzyme by ATP; (B) transfer of adenylate to an RNA-N3'P to produce RNA-N3'PP5'A; (C) and attack of the adjacent 2'-hydroxyl on the 3'-phosphorus in the diester linkage to produce the cyclic end product. The biological role of this enzyme is unknown but it is likely to function in some aspects of cellular RNA processing. This Salmonella typhimurium (strain LT2 / SGSC1412 / ATCC 700720) protein is RNA 3'-terminal phosphate cyclase.